The primary structure comprises 585 residues: A-type ATP synthase subunit A (585 aa).

ATP is bound at residue 232 to 239; the sequence is GPFGSGKT.

Belongs to the ATPase alpha/beta chains family. In terms of assembly, has multiple subunits with at least A(3), B(3), C, D, E, F, H, I and proteolipid K(x).

It is found in the cell membrane. It catalyses the reaction ATP + H2O + 4 H(+)(in) = ADP + phosphate + 5 H(+)(out). Functionally, component of the A-type ATP synthase that produces ATP from ADP in the presence of a proton gradient across the membrane. The A chain is the catalytic subunit. In Methanosphaera stadtmanae (strain ATCC 43021 / DSM 3091 / JCM 11832 / MCB-3), this protein is A-type ATP synthase subunit A.